The following is a 450-amino-acid chain: Tubulin alpha-6 chain (450 aa).

Residues glutamine 11, glutamate 71, glycine 144, threonine 145, threonine 179, asparagine 206, and asparagine 228 each coordinate GTP. Glutamate 71 lines the Mg(2+) pocket. The active site involves glutamate 254.

Belongs to the tubulin family. As to quaternary structure, dimer of alpha and beta chains. A typical microtubule is a hollow water-filled tube with an outer diameter of 25 nm and an inner diameter of 15 nM. Alpha-beta heterodimers associate head-to-tail to form protofilaments running lengthwise along the microtubule wall with the beta-tubulin subunit facing the microtubule plus end conferring a structural polarity. Microtubules usually have 13 protofilaments but different protofilament numbers can be found in some organisms and specialized cells. Mg(2+) is required as a cofactor. In terms of processing, undergoes a tyrosination/detyrosination cycle, the cyclic removal and re-addition of a C-terminal tyrosine residue by the enzymes tubulin tyrosine carboxypeptidase (TTCP) and tubulin tyrosine ligase (TTL), respectively.

Its subcellular location is the cytoplasm. It localises to the cytoskeleton. The enzyme catalyses GTP + H2O = GDP + phosphate + H(+). Its function is as follows. Tubulin is the major constituent of microtubules, a cylinder consisting of laterally associated linear protofilaments composed of alpha- and beta-tubulin heterodimers. Microtubules grow by the addition of GTP-tubulin dimers to the microtubule end, where a stabilizing cap forms. Below the cap, tubulin dimers are in GDP-bound state, owing to GTPase activity of alpha-tubulin. The polypeptide is Tubulin alpha-6 chain (TUBA6) (Zea mays (Maize)).